The primary structure comprises 398 residues: Riboflavin biosynthesis protein RibBA (398 aa).

The DHBP synthase stretch occupies residues 1 to 199 (MFHPIEEALD…IKDLIQYRYN (199 aa)). D-ribulose 5-phosphate-binding positions include 26–27 (RE), Asp31, 138–142 (RAGHT), and Glu162. Glu27 contributes to the Mg(2+) binding site. His141 provides a ligand contact to Mg(2+). Residues 200–398 (LTTLVEREVD…MNKLGHLLHF (199 aa)) form a GTP cyclohydrolase II region. 251-255 (RVHSE) is a GTP binding site. Zn(2+)-binding residues include Cys256, Cys267, and Cys269. GTP is bound by residues Gln272, 294-296 (EGR), and Thr316. The Proton acceptor; for GTP cyclohydrolase activity role is filled by Asp328. Arg330 serves as the catalytic Nucleophile; for GTP cyclohydrolase activity. 2 residues coordinate GTP: Thr351 and Lys356.

The protein in the N-terminal section; belongs to the DHBP synthase family. This sequence in the C-terminal section; belongs to the GTP cyclohydrolase II family. Mg(2+) serves as cofactor. Requires Mn(2+) as cofactor. It depends on Zn(2+) as a cofactor.

The enzyme catalyses D-ribulose 5-phosphate = (2S)-2-hydroxy-3-oxobutyl phosphate + formate + H(+). It catalyses the reaction GTP + 4 H2O = 2,5-diamino-6-hydroxy-4-(5-phosphoribosylamino)-pyrimidine + formate + 2 phosphate + 3 H(+). It functions in the pathway cofactor biosynthesis; riboflavin biosynthesis; 2-hydroxy-3-oxobutyl phosphate from D-ribulose 5-phosphate: step 1/1. It participates in cofactor biosynthesis; riboflavin biosynthesis; 5-amino-6-(D-ribitylamino)uracil from GTP: step 1/4. Its function is as follows. Catalyzes the conversion of D-ribulose 5-phosphate to formate and 3,4-dihydroxy-2-butanone 4-phosphate. Catalyzes the conversion of GTP to 2,5-diamino-6-ribosylamino-4(3H)-pyrimidinone 5'-phosphate (DARP), formate and pyrophosphate. In Bacillus subtilis (strain 168), this protein is Riboflavin biosynthesis protein RibBA.